The chain runs to 487 residues: MERLIKNSIAYSRFRGDWECKSQFERKQESQEGHLSQMIFTPEDMPTFNTQHQRIHTDEKLLECKECGKDFSFVSVLIRHQRIHTGEKPYECKECGKAFGSGANLAYHQRIHTGEKPYECNECGKAFGSGSNLTHHQRIHTGEKPYECKECGKAFSFGSGLIRHQIIHSGEKPYECKVCGKSFSFESALTRHHRIHTGEKPYECKDCGKAFGSGSNLTQHRRVHTGEKPYECKGCGMAFSSGSALTRHQRIHTGEKPYICNECGKAFSFGSALTRHQRIHTGEKPYVCKECGKAFNSGSDLTQHQRIHTGEKPYECKECEKAFRSGSKLIQHQRMHTGEKPYECKECGKAFSSGSDLTQHQRIHTGEKPYECKECGKAFASGSKLIQHQLIHTGEKPYECRECRKSFSSGSALNRHQRIHTGQKPYECKECEKTFGTGSTLTQHQRMHTAEKLYECKACGKALGRGSEIQQHKKNHAGEKLCELETP.

15 consecutive C2H2-type zinc fingers follow at residues 62-84 (LECK…QRIH), 90-112 (YECK…QRIH), 118-140 (YECN…QRIH), 146-168 (YECK…QIIH), 174-196 (YECK…HRIH), 202-224 (YECK…RRVH), 230-252 (YECK…QRIH), 258-280 (YICN…QRIH), 286-308 (YVCK…QRIH), 314-336 (YECK…QRMH), 342-364 (YECK…QRIH), 370-392 (YECK…QLIH), 398-420 (YECR…QRIH), 426-448 (YECK…QRMH), and 454-476 (YECK…KKNH).

It belongs to the krueppel C2H2-type zinc-finger protein family.

The protein resides in the nucleus. In terms of biological role, may be involved in transcriptional regulation. This is Zinc finger protein 345 (ZNF345) from Bos taurus (Bovine).